The sequence spans 390 residues: Telobox protein 1 (390 aa).

The interval 30 to 57 (ENPSKREVAQDVPGFERKPTKVRKPRVK) is disordered. Basic and acidic residues predominate over residues 32 to 48 (PSKREVAQDVPGFERKP). 2 consecutive HTH myb-type domains span residues 50–109 (KVRK…PEDY) and 135–193 (STRK…PERY). The segment at residues 78-105 (WKKILLDERFHFTNRSPNDLKDRFRTIL) is a DNA-binding region (H-T-H motif). The disordered stretch occupies residues 115 to 143 (NAKTHMGRPQKIPHTVGLSKSTRKERKQF). A DNA-binding region (H-T-H motif) is located at residues 162–189 (WTRISKDANLGLQNRRSTDLRDRFRNAF). Polar residues-rich tracts occupy residues 244-257 (SNPN…TEQP) and 322-340 (ISPS…SIQQ). 2 disordered regions span residues 244–278 (SNPN…FTSQ) and 316–390 (QPPS…DNRG). Over residues 347-360 (PPLSSNTLNSSTLP) the composition is skewed to low complexity.

It is found in the nucleus. General transcription factor with prominent roles in controlling histone levels and stability. Binds and regulates the activities of many promoters, including those controlling the expression of all four types of canonical histones. Is also involved in the centromeric loading of cnp1 and maintenance of centromere identity. Moreover, regulates the expression of cdc2, a protease capable of histone clipping. The protein is Telobox protein 1 of Schizosaccharomyces pombe (strain 972 / ATCC 24843) (Fission yeast).